The following is a 215-amino-acid chain: Cytochrome b6 (215 aa).

The chain crosses the membrane as a helical span at residues 32–52 (IFYCLGGITLTCFLVQVATGF). Cys35 contacts heme c. Heme b is bound by residues His86 and His100. The next 3 helical transmembrane spans lie at 90–110 (ASMMVLMMILHVFRVYLTGGF), 116–136 (LTWVTGVVLAVLTASFGVTGY), and 186–206 (LHTFVLPLVSAVFMLIHFLMI). 2 residues coordinate heme b: His187 and His202.

This sequence belongs to the cytochrome b family. PetB subfamily. The 4 large subunits of the cytochrome b6-f complex are cytochrome b6, subunit IV (17 kDa polypeptide, PetD), cytochrome f and the Rieske protein, while the 4 small subunits are PetG, PetL, PetM and PetN. The complex functions as a dimer. Heme b is required as a cofactor. Requires heme c as cofactor.

The protein resides in the plastid. The protein localises to the chloroplast thylakoid membrane. Its function is as follows. Component of the cytochrome b6-f complex, which mediates electron transfer between photosystem II (PSII) and photosystem I (PSI), cyclic electron flow around PSI, and state transitions. This chain is Cytochrome b6, found in Pelargonium hortorum (Common geranium).